Reading from the N-terminus, the 357-residue chain is tRNA-specific 2-thiouridylase MnmA (357 aa).

Residues 6 to 13 (AMSGGVDS) and Leu-32 each bind ATP. Cys-101 acts as the Nucleophile in catalysis. Cys-101 and Cys-193 are oxidised to a cystine. ATP is bound at residue Gly-125. The segment at 143 to 145 (KDQ) is interaction with tRNA. Catalysis depends on Cys-193, which acts as the Cysteine persulfide intermediate.

The protein belongs to the MnmA/TRMU family.

The protein resides in the cytoplasm. It carries out the reaction S-sulfanyl-L-cysteinyl-[protein] + uridine(34) in tRNA + AH2 + ATP = 2-thiouridine(34) in tRNA + L-cysteinyl-[protein] + A + AMP + diphosphate + H(+). Its function is as follows. Catalyzes the 2-thiolation of uridine at the wobble position (U34) of tRNA, leading to the formation of s(2)U34. This Mycolicibacterium gilvum (strain PYR-GCK) (Mycobacterium gilvum (strain PYR-GCK)) protein is tRNA-specific 2-thiouridylase MnmA.